A 497-amino-acid chain; its full sequence is L-arabinose isomerase (497 aa).

Residues Glu-306, Glu-331, His-348, and His-447 each contribute to the Mn(2+) site.

This sequence belongs to the arabinose isomerase family. The cofactor is Mn(2+).

The enzyme catalyses beta-L-arabinopyranose = L-ribulose. Its pathway is carbohydrate degradation; L-arabinose degradation via L-ribulose; D-xylulose 5-phosphate from L-arabinose (bacterial route): step 1/3. In terms of biological role, catalyzes the conversion of L-arabinose to L-ribulose. The sequence is that of L-arabinose isomerase from Halalkalibacterium halodurans (strain ATCC BAA-125 / DSM 18197 / FERM 7344 / JCM 9153 / C-125) (Bacillus halodurans).